The following is a 719-amino-acid chain: Phosphoribosylformylglycinamidine synthase subunit PurL (719 aa).

Residue H47 is part of the active site. The ATP site is built by Y50 and K89. E91 provides a ligand contact to Mg(2+). Residues 92–95 (SHNH) and R114 contribute to the substrate site. H93 acts as the Proton acceptor in catalysis. D115 lines the Mg(2+) pocket. Q238 is a substrate binding site. Residue D266 participates in Mg(2+) binding. 310 to 312 (ESQ) contacts substrate. Residues D488 and G525 each coordinate ATP. N526 is a Mg(2+) binding site. S528 is a binding site for substrate.

This sequence belongs to the FGAMS family. In terms of assembly, monomer. Part of the FGAM synthase complex composed of 1 PurL, 1 PurQ and 2 PurS subunits.

It localises to the cytoplasm. It catalyses the reaction N(2)-formyl-N(1)-(5-phospho-beta-D-ribosyl)glycinamide + L-glutamine + ATP + H2O = 2-formamido-N(1)-(5-O-phospho-beta-D-ribosyl)acetamidine + L-glutamate + ADP + phosphate + H(+). Its pathway is purine metabolism; IMP biosynthesis via de novo pathway; 5-amino-1-(5-phospho-D-ribosyl)imidazole from N(2)-formyl-N(1)-(5-phospho-D-ribosyl)glycinamide: step 1/2. Its function is as follows. Part of the phosphoribosylformylglycinamidine synthase complex involved in the purines biosynthetic pathway. Catalyzes the ATP-dependent conversion of formylglycinamide ribonucleotide (FGAR) and glutamine to yield formylglycinamidine ribonucleotide (FGAM) and glutamate. The FGAM synthase complex is composed of three subunits. PurQ produces an ammonia molecule by converting glutamine to glutamate. PurL transfers the ammonia molecule to FGAR to form FGAM in an ATP-dependent manner. PurS interacts with PurQ and PurL and is thought to assist in the transfer of the ammonia molecule from PurQ to PurL. This chain is Phosphoribosylformylglycinamidine synthase subunit PurL, found in Ruegeria pomeroyi (strain ATCC 700808 / DSM 15171 / DSS-3) (Silicibacter pomeroyi).